The following is a 70-amino-acid chain: DNA-directed RNA polymerase subunit omega (70 aa).

It belongs to the RNA polymerase subunit omega family. As to quaternary structure, the RNAP catalytic core consists of 2 alpha, 1 beta, 1 beta' and 1 omega subunit. When a sigma factor is associated with the core the holoenzyme is formed, which can initiate transcription.

The enzyme catalyses RNA(n) + a ribonucleoside 5'-triphosphate = RNA(n+1) + diphosphate. Its function is as follows. Promotes RNA polymerase assembly. Latches the N- and C-terminal regions of the beta' subunit thereby facilitating its interaction with the beta and alpha subunits. In Thermoanaerobacter pseudethanolicus (strain ATCC 33223 / 39E) (Clostridium thermohydrosulfuricum), this protein is DNA-directed RNA polymerase subunit omega.